The chain runs to 198 residues: Ribonuclease HII (198 aa).

One can recognise an RNase H type-2 domain in the interval 10–198 (QLVAGVDEVG…PVKRALGLAS (189 aa)). Positions 16, 17, and 108 each coordinate a divalent metal cation.

This sequence belongs to the RNase HII family. It depends on Mn(2+) as a cofactor. Requires Mg(2+) as cofactor.

Its subcellular location is the cytoplasm. The catalysed reaction is Endonucleolytic cleavage to 5'-phosphomonoester.. Its function is as follows. Endonuclease that specifically degrades the RNA of RNA-DNA hybrids. The chain is Ribonuclease HII from Shigella sonnei (strain Ss046).